A 101-amino-acid polypeptide reads, in one-letter code: ATP-dependent Clp protease adapter protein ClpS 2 (101 aa).

This sequence belongs to the ClpS family. Binds to the N-terminal domain of the chaperone ClpA.

In terms of biological role, involved in the modulation of the specificity of the ClpAP-mediated ATP-dependent protein degradation. The polypeptide is ATP-dependent Clp protease adapter protein ClpS 2 (Rhizobium meliloti (strain 1021) (Ensifer meliloti)).